Here is a 298-residue protein sequence, read N- to C-terminus: Rhodomycin D methylesterase DauP (298 aa).

Residues 25–277 form the AB hydrolase-1 domain; the sequence is PLLLIAGGNL…VEIENMGHAL (253 aa).

It belongs to the methyl esterase DnrP family.

The catalysed reaction is rhodomycin D + H2O = 10-carboxy-13-deoxycarminomycin + methanol + H(+). It carries out the reaction 4-O-methylrhodomycin D + H2O = 10-carboxy-13-deoxydaunorubicin + methanol + H(+). It participates in antibiotic biosynthesis; daunorubicin biosynthesis. The protein operates within antibiotic biosynthesis; carminomycin biosynthesis. Its function is as follows. Involved in the biosynthesis of the anthracyclines carminomycin and daunorubicin (daunomycin) which are aromatic polyketide antibiotics that exhibit high cytotoxicity and are widely applied in the chemotherapy of a variety of cancers. Catalyzes the removal of methyl group from the carbomethoxy group of rhodomycin D (10-carbomethoxy-13-deoxycarminomycin) and 4-O-methylrhodomycin D to yield 10-carboxy-13-deoxycarminomycin and 10-carboxy-13-deoxydaunorubicin, respectively. Could be also involved in the decarboxylation of 10-carboxy-13-deoxycarminomycin and 10-carboxy-13-deoxydaunorubicin to yield 13-deoxycarminomycin and 13-deoxydaunorubicin, respectively. It seems that DauK may influence the ability of DauP to carry out the decarboxylation. The chain is Rhodomycin D methylesterase DauP (dauP) from Streptomyces sp. (strain C5).